Consider the following 164-residue polypeptide: Disulfide bond formation protein B (164 aa).

Residues 1 to 4 lie on the Cytoplasmic side of the membrane; it reads MRII. A helical transmembrane segment spans residues 5 to 21; it reads FLLIALICAGLVSYALY. Residues 22-39 lie on the Periplasmic side of the membrane; the sequence is LQLADGLLPCPLCIFQRM. An intrachain disulfide couples cysteine 31 to cysteine 34. The helical transmembrane segment at 40-56 threads the bilayer; sequence AYWLVGITALFAFIHHP. Residues 57–62 lie on the Cytoplasmic side of the membrane; that stretch reads QRLGRR. The helical transmembrane segment at 63–80 threads the bilayer; it reads IYCGLIILFSLAGAIVAG. Topologically, residues 81 to 136 are periplasmic; the sequence is RQAWLVRFPEAFECGISPEEAFLNELPLARWWPDMFEANGDCTDGTWQFLSLTIPD. A disulfide bridge links cysteine 94 with cysteine 122. Residues 137 to 155 traverse the membrane as a helical segment; sequence WSLLIFLAFSLIAGLLWRS. The Cytoplasmic segment spans residues 156 to 164; sequence RSISSSNLK.

Belongs to the DsbB family.

The protein resides in the cell inner membrane. In terms of biological role, required for disulfide bond formation in some periplasmic proteins. Acts by oxidizing the DsbA protein. The sequence is that of Disulfide bond formation protein B from Nitrosomonas europaea (strain ATCC 19718 / CIP 103999 / KCTC 2705 / NBRC 14298).